Reading from the N-terminus, the 83-residue chain is uncharacterized protein (83 aa).

A helical transmembrane segment spans residues 24–44; sequence AMTLLIITNTLLIILSYSVLL.

The protein localises to the host membrane. This is an uncharacterized protein from Acidianus sp. F28 (AFV-2).